A 114-amino-acid chain; its full sequence is Large ribosomal subunit protein P2 (114 aa).

Over residues 74 to 83 the composition is skewed to gly residues; the sequence is AAAAGGGGGD. Residues 74 to 114 form a disordered region; it reads AAAAGGGGGDAPAAAAEEPKKEEKSEEESDEELGFSLFDDN. The segment covering 98–114 has biased composition (acidic residues); sequence SEEESDEELGFSLFDDN.

This sequence belongs to the eukaryotic ribosomal protein P1/P2 family. In terms of assembly, P1 and P2 exist as dimers at the large ribosomal subunit. In terms of processing, phosphorylated.

Plays an important role in the elongation step of protein synthesis. The polypeptide is Large ribosomal subunit protein P2 (Parthenium argentatum (Guayule rubber plant)).